Here is a 177-residue protein sequence, read N- to C-terminus: Translation initiation factor IF-3 (177 aa).

The protein belongs to the IF-3 family. Monomer.

The protein localises to the cytoplasm. In terms of biological role, IF-3 binds to the 30S ribosomal subunit and shifts the equilibrium between 70S ribosomes and their 50S and 30S subunits in favor of the free subunits, thus enhancing the availability of 30S subunits on which protein synthesis initiation begins. The polypeptide is Translation initiation factor IF-3 (Clostridium perfringens (strain 13 / Type A)).